We begin with the raw amino-acid sequence, 398 residues long: 4-hydroxy-3-methylbut-2-en-1-yl diphosphate synthase (ferredoxin) (398 aa).

[4Fe-4S] cluster is bound by residues Cys-306, Cys-309, Cys-340, and Glu-347.

Belongs to the IspG family. [4Fe-4S] cluster is required as a cofactor.

It catalyses the reaction (2E)-4-hydroxy-3-methylbut-2-enyl diphosphate + 2 oxidized [2Fe-2S]-[ferredoxin] + H2O = 2-C-methyl-D-erythritol 2,4-cyclic diphosphate + 2 reduced [2Fe-2S]-[ferredoxin] + H(+). It functions in the pathway isoprenoid biosynthesis; isopentenyl diphosphate biosynthesis via DXP pathway; isopentenyl diphosphate from 1-deoxy-D-xylulose 5-phosphate: step 5/6. Converts 2C-methyl-D-erythritol 2,4-cyclodiphosphate (ME-2,4cPP) into 1-hydroxy-2-methyl-2-(E)-butenyl 4-diphosphate. This is 4-hydroxy-3-methylbut-2-en-1-yl diphosphate synthase (ferredoxin) from Synechococcus sp. (strain CC9311).